We begin with the raw amino-acid sequence, 286 residues long: Polyamine aminopropyltransferase (286 aa).

In terms of domain architecture, PABS spans 5–242 (DNWFTEVLEE…GWWSATLASK (238 aa)). Gln-35 serves as a coordination point for S-methyl-5'-thioadenosine. The spermidine site is built by His-66 and Asp-90. S-methyl-5'-thioadenosine-binding positions include Asp-110 and 141-142 (DG). The Proton acceptor role is filled by Asp-160. 160–163 (DSTD) serves as a coordination point for spermidine.

Belongs to the spermidine/spermine synthase family. In terms of assembly, homodimer or homotetramer.

Its subcellular location is the cytoplasm. It catalyses the reaction S-adenosyl 3-(methylsulfanyl)propylamine + putrescine = S-methyl-5'-thioadenosine + spermidine + H(+). It functions in the pathway amine and polyamine biosynthesis; spermidine biosynthesis; spermidine from putrescine: step 1/1. Functionally, catalyzes the irreversible transfer of a propylamine group from the amino donor S-adenosylmethioninamine (decarboxy-AdoMet) to putrescine (1,4-diaminobutane) to yield spermidine. The sequence is that of Polyamine aminopropyltransferase from Alkalilimnicola ehrlichii (strain ATCC BAA-1101 / DSM 17681 / MLHE-1).